A 239-amino-acid chain; its full sequence is MGRSFEVRKASMAKTQGAKIKVYSKYGKEIYVCAKNGGTDPDMNLSLRHLITKAKKDQVPAHVIEKALDKASGGAGEDYQPARYEGFGPGGASVIVDCLTDNGNRTYQDVRQCFVKTGAKIGTPGVVAHMFDHQAVFQFQGDDEEAILEALMMADAEVTDIEHEDGVITVFAPNTEFFKVKTALNEAFPDLTLDVEEITFVPQNRTVVSGEDAEKFQKFLDMLDDCDDVQQVYHNADIE.

It belongs to the TACO1 family.

The protein resides in the cytoplasm. The protein is Probable transcriptional regulatory protein VC_A0006 of Vibrio cholerae serotype O1 (strain ATCC 39315 / El Tor Inaba N16961).